We begin with the raw amino-acid sequence, 262 residues long: Small ribosomal subunit protein uS2 (262 aa).

The protein belongs to the universal ribosomal protein uS2 family.

The chain is Small ribosomal subunit protein uS2 from Borrelia garinii subsp. bavariensis (strain ATCC BAA-2496 / DSM 23469 / PBi) (Borreliella bavariensis).